We begin with the raw amino-acid sequence, 276 residues long: Putative pyruvate, phosphate dikinase regulatory protein (276 aa).

An ADP-binding site is contributed by Gly-153–Thr-160.

The protein belongs to the pyruvate, phosphate/water dikinase regulatory protein family. PDRP subfamily.

It carries out the reaction N(tele)-phospho-L-histidyl/L-threonyl-[pyruvate, phosphate dikinase] + ADP = N(tele)-phospho-L-histidyl/O-phospho-L-threonyl-[pyruvate, phosphate dikinase] + AMP + H(+). The catalysed reaction is N(tele)-phospho-L-histidyl/O-phospho-L-threonyl-[pyruvate, phosphate dikinase] + phosphate + H(+) = N(tele)-phospho-L-histidyl/L-threonyl-[pyruvate, phosphate dikinase] + diphosphate. Bifunctional serine/threonine kinase and phosphorylase involved in the regulation of the pyruvate, phosphate dikinase (PPDK) by catalyzing its phosphorylation/dephosphorylation. The protein is Putative pyruvate, phosphate dikinase regulatory protein of Brucella anthropi (strain ATCC 49188 / DSM 6882 / CCUG 24695 / JCM 21032 / LMG 3331 / NBRC 15819 / NCTC 12168 / Alc 37) (Ochrobactrum anthropi).